Consider the following 91-residue polypeptide: Cell division topological specificity factor (91 aa).

It belongs to the MinE family.

Its function is as follows. Prevents the cell division inhibition by proteins MinC and MinD at internal division sites while permitting inhibition at polar sites. This ensures cell division at the proper site by restricting the formation of a division septum at the midpoint of the long axis of the cell. This is Cell division topological specificity factor from Caldanaerobacter subterraneus subsp. tengcongensis (strain DSM 15242 / JCM 11007 / NBRC 100824 / MB4) (Thermoanaerobacter tengcongensis).